Here is a 291-residue protein sequence, read N- to C-terminus: Ribonuclease Z (291 aa).

7 residues coordinate Zn(2+): His-61, His-63, Asp-65, His-66, His-133, Asp-201, and His-257. Asp-65 (proton acceptor) is an active-site residue.

This sequence belongs to the RNase Z family. As to quaternary structure, homodimer. The cofactor is Zn(2+).

The catalysed reaction is Endonucleolytic cleavage of RNA, removing extra 3' nucleotides from tRNA precursor, generating 3' termini of tRNAs. A 3'-hydroxy group is left at the tRNA terminus and a 5'-phosphoryl group is left at the trailer molecule.. Zinc phosphodiesterase, which displays some tRNA 3'-processing endonuclease activity. Probably involved in tRNA maturation, by removing a 3'-trailer from precursor tRNA. This chain is Ribonuclease Z, found in Saccharolobus islandicus (strain M.16.27) (Sulfolobus islandicus).